The sequence spans 360 residues: Tryptophan--tRNA ligase, mitochondrial (360 aa).

Residues 1-18 (MALHSMRKARERWSFIRA) constitute a mitochondrion transit peptide. ATP-binding positions include glutamine 42 and 48 to 51 (HLGN). Residue aspartate 167 coordinates L-tryptophan. ATP-binding positions include 179–181 (GED), valine 217, and 226–230 (KMSKS).

This sequence belongs to the class-I aminoacyl-tRNA synthetase family. In terms of tissue distribution, brain.

The protein localises to the mitochondrion matrix. The protein resides in the mitochondrion. The catalysed reaction is tRNA(Trp) + L-tryptophan + ATP = L-tryptophyl-tRNA(Trp) + AMP + diphosphate + H(+). In terms of biological role, catalyzes the attachment of tryptophan to tRNA(Trp) in a two-step reaction: tryptophan is first activated by ATP to form Trp-AMP and then transferred to the acceptor end of tRNA(Trp). The polypeptide is Tryptophan--tRNA ligase, mitochondrial (WARS2) (Homo sapiens (Human)).